Here is a 236-residue protein sequence, read N- to C-terminus: Small ribosomal subunit protein uS2c (236 aa).

In terms of assembly, component of the chloroplast small ribosomal subunit (SSU). Mature 70S chloroplast ribosomes of higher plants consist of a small (30S) and a large (50S) subunit. The 30S small subunit contains 1 molecule of ribosomal RNA (16S rRNA) and 24 different proteins. The 50S large subunit contains 3 rRNA molecules (23S, 5S and 4.5S rRNA) and 33 different proteins.

It localises to the plastid. The protein resides in the chloroplast. In terms of biological role, component of the chloroplast ribosome (chloro-ribosome), a dedicated translation machinery responsible for the synthesis of chloroplast genome-encoded proteins, including proteins of the transcription and translation machinery and components of the photosynthetic apparatus. This is Small ribosomal subunit protein uS2c (rps2) from Spinacia oleracea (Spinach).